Reading from the N-terminus, the 170-residue chain is Protein ripply3 (170 aa).

Positions 40–43 match the WRPW motif motif; it reads WRPW. Basic and acidic residues predominate over residues 51-61; sequence ELDGQQRRSGE. Positions 51–78 are disordered; that stretch reads ELDGQQRRSGEADGVPTNTGPKGALGFQ. Positions 79–114 are ripply homology domain; the sequence is HPVRLYMPKSKTSEYLQHMGRKVLASFPVQATIHFY. Positions 142–155 are enriched in polar residues; that stretch reads GVDSSRGSSDNYSV. Residues 142–170 form a disordered region; it reads GVDSSRGSSDNYSVQGGPKRNIGSHAGSA.

The protein belongs to the ripply family. As to quaternary structure, interacts with tbx1 and tle4/grg4. In terms of tissue distribution, at neurula stage, expressed in the region close to the heart mesoderm. At the tailbud stage, expressed in the pharyngeal region.

It is found in the nucleus. Its function is as follows. Acts as a transcriptional corepressor. Negative regulator of the transcriptional activity of tbx1 that plays a key role in pharyngeal development. Plays a role in the formation of the anteroposterior (AP) axis during embryonic development; required to establish the posterolateral border of the pre-placodal ectoderm (PPE) acting downstream of the retinoic acid receptor (RAR) signaling. In Xenopus laevis (African clawed frog), this protein is Protein ripply3 (ripply3).